The chain runs to 60 residues: Protein CADMIUM TOLERANCE 4 (60 aa).

The helical transmembrane segment at 26–42 (GFLYACLFMLCCCFCCY) threads the bilayer.

Belongs to the CYSTM1 family. In terms of tissue distribution, mainly expressed in shoots, and, to a lower extent, in roots.

It localises to the cell membrane. Its subcellular location is the secreted. The protein localises to the cell wall. In terms of biological role, confers resistance to heavy metal ions (e.g. aluminium (Al)) by chelating them at the plasma membrane of root cells, thus stopping their entry and reducing their accumulation. This Oryza sativa subsp. japonica (Rice) protein is Protein CADMIUM TOLERANCE 4.